Consider the following 309-residue polypeptide: MVVQAVSESLKFDQSRFLNDIQILSAAINAPYSESTTKKVLSVFSDSFHDGVVLWRATDRVGDALNYRFYSRRPIDTVTIASSAGLLSPDVVSNLGRLVTSWSSLYDGLPEESCDFDAEKGLVKAWVYMRGMRPLGDILSAEGVPESLKQHEERFKALELEKVRHVAVDYQKATVNLYFRAQGPISLQQATSFNALAGAGPPSQTQFLEMQEFLNAVGYTFAVTIRVDSGDIERVGYYALKLPDRATKNWPVINAQLEKFAQFAPSYDREEMNAVAWSFGGTKRYVKFERSYCGELVPLIKGWGTTLSS.

Belongs to the aromatic prenyltransferase family.

In terms of biological role, prenyltransferase that attaches isoprenoid moieties to carbon atoms of aromatic substrates in an enzyme-catalyzed Friedel-Crafts reaction. Shows specificity for dimethylallyl diphosphate (DMAPP) and does not accept geranyl diphosphate (GPP) or isopentenyl diphosphate (IPP). Prenylates the artificial substrate 2,7-dihydroxynaphthalene (2,7-DHN), as well as dihydrophenazine-1-carboxylic acid and 4-hydroxybenzoic acid at lower levels. Only traces of products are detected with aspulvinone E or flaviolin as substrates; and no product is formed with L-tryptophan, L-tyrosine, or 4-hydroxyphenylpyruvate. Ptf seems no to be involved in the prenylation reaction in the biosynthesis of aspulvinone H and J and the physiological function of ptf remains unknown. In Botryotinia fuckeliana (strain B05.10) (Noble rot fungus), this protein is Aromatic prenyltransferase.